The sequence spans 380 residues: Glutamate 5-kinase (380 aa).

Lysine 15 serves as a coordination point for ATP. Substrate-binding residues include serine 59, aspartate 146, and asparagine 158. 178-179 (TD) is a binding site for ATP. One can recognise a PUA domain in the interval 285-363 (RGSVTVDAGA…AEFERLLGYA (79 aa)).

It belongs to the glutamate 5-kinase family.

It localises to the cytoplasm. The enzyme catalyses L-glutamate + ATP = L-glutamyl 5-phosphate + ADP. The protein operates within amino-acid biosynthesis; L-proline biosynthesis; L-glutamate 5-semialdehyde from L-glutamate: step 1/2. Catalyzes the transfer of a phosphate group to glutamate to form L-glutamate 5-phosphate. This is Glutamate 5-kinase from Acidovorax ebreus (strain TPSY) (Diaphorobacter sp. (strain TPSY)).